The sequence spans 98 residues: NADH-ubiquinone oxidoreductase chain 4L (98 aa).

The next 3 helical transmembrane spans lie at 1 to 21 (MPIIYMNITLAFIISLLGMLV), 29 to 49 (SLLCLEGMMLSLFMMSTLMAL), and 61 to 81 (IALLVFAACEAAVGLALLVSI).

It belongs to the complex I subunit 4L family. In terms of assembly, core subunit of respiratory chain NADH dehydrogenase (Complex I) which is composed of 45 different subunits.

It is found in the mitochondrion inner membrane. It catalyses the reaction a ubiquinone + NADH + 5 H(+)(in) = a ubiquinol + NAD(+) + 4 H(+)(out). Functionally, core subunit of the mitochondrial membrane respiratory chain NADH dehydrogenase (Complex I) which catalyzes electron transfer from NADH through the respiratory chain, using ubiquinone as an electron acceptor. Part of the enzyme membrane arm which is embedded in the lipid bilayer and involved in proton translocation. This Piliocolobus badius (Western red colobus) protein is NADH-ubiquinone oxidoreductase chain 4L (MT-ND4L).